We begin with the raw amino-acid sequence, 338 residues long: MKVFYDKDADLSLIKGKQVTIIGYGSQGHAHALNLKDSGVNVTVGLRRGGASWSKAENAGLAVKEVAEAVKGADVVMMLLPDEQIAAVYAQEVHANIKEGAALAFAHGFNVHYGQVIPRADLDVIMVAPKAPGHTVRGTYAQGGGVPHLIAVAQDKSGAARDIALSYAAANGGGRAGIIETNFREETETDLFGEQAVLCGGTVELIKAGFETLVEAGYAPEMAYFECLHELKLIVDLIYEGGIANMNYSISNNAEYGEYVTGPRVVTEETKKAMKQCLTDIQTGEYAKSFILENKAGAPTLQSRRRLTAEHQIEQVGSKLRAMMPWIAKNKLVDQSKN.

In terms of domain architecture, KARI N-terminal Rossmann spans 1–181 (MKVFYDKDAD…GGGRAGIIET (181 aa)). NADP(+) contacts are provided by residues 24-27 (YGSQ), arginine 47, and serine 52. Histidine 107 is an active-site residue. Glycine 133 contacts NADP(+). Residues 182–327 (NFREETETDL…SKLRAMMPWI (146 aa)) form the KARI C-terminal knotted domain. Aspartate 190, glutamate 194, glutamate 226, and glutamate 230 together coordinate Mg(2+). Serine 251 contributes to the substrate binding site.

It belongs to the ketol-acid reductoisomerase family. It depends on Mg(2+) as a cofactor.

It carries out the reaction (2R)-2,3-dihydroxy-3-methylbutanoate + NADP(+) = (2S)-2-acetolactate + NADPH + H(+). The catalysed reaction is (2R,3R)-2,3-dihydroxy-3-methylpentanoate + NADP(+) = (S)-2-ethyl-2-hydroxy-3-oxobutanoate + NADPH + H(+). It participates in amino-acid biosynthesis; L-isoleucine biosynthesis; L-isoleucine from 2-oxobutanoate: step 2/4. Its pathway is amino-acid biosynthesis; L-valine biosynthesis; L-valine from pyruvate: step 2/4. Functionally, involved in the biosynthesis of branched-chain amino acids (BCAA). Catalyzes an alkyl-migration followed by a ketol-acid reduction of (S)-2-acetolactate (S2AL) to yield (R)-2,3-dihydroxy-isovalerate. In the isomerase reaction, S2AL is rearranged via a Mg-dependent methyl migration to produce 3-hydroxy-3-methyl-2-ketobutyrate (HMKB). In the reductase reaction, this 2-ketoacid undergoes a metal-dependent reduction by NADPH to yield (R)-2,3-dihydroxy-isovalerate. This Burkholderia mallei (strain NCTC 10229) protein is Ketol-acid reductoisomerase (NADP(+)).